Consider the following 198-residue polypeptide: Probable GTP-binding protein EngB (198 aa).

In terms of domain architecture, EngB-type G spans 22-195 (DLPEIALAGR…WKAIHKFTKT (174 aa)). Residues 30–37 (GRSNVGKS), 57–61 (GKTQT), 75–78 (DVPG), 142–145 (TKAD), and 174–176 (FSS) each bind GTP. 2 residues coordinate Mg(2+): Ser37 and Thr59.

This sequence belongs to the TRAFAC class TrmE-Era-EngA-EngB-Septin-like GTPase superfamily. EngB GTPase family. The cofactor is Mg(2+).

Necessary for normal cell division and for the maintenance of normal septation. The polypeptide is Probable GTP-binding protein EngB (Bacillus anthracis (strain A0248)).